Here is a 390-residue protein sequence, read N- to C-terminus: 3-ketoacyl-CoA thiolase (390 aa).

C95 (acyl-thioester intermediate) is an active-site residue. Residues H346 and C376 each act as proton acceptor in the active site.

It belongs to the thiolase-like superfamily. Thiolase family. As to quaternary structure, heterotetramer of two alpha chains (FadB) and two beta chains (FadA).

It localises to the cytoplasm. The catalysed reaction is an acyl-CoA + acetyl-CoA = a 3-oxoacyl-CoA + CoA. Its pathway is lipid metabolism; fatty acid beta-oxidation. Functionally, catalyzes the final step of fatty acid oxidation in which acetyl-CoA is released and the CoA ester of a fatty acid two carbons shorter is formed. This chain is 3-ketoacyl-CoA thiolase, found in Psychrobacter sp. (strain PRwf-1).